Here is a 237-residue protein sequence, read N- to C-terminus: Lectin alpha chain (237 aa).

Positions 8 and 10 each coordinate Mn(2+). Ca(2+) contacts are provided by D10, Y12, N14, and D19. Residues Y12 and N14 each coordinate a carbohydrate. The Mn(2+) site is built by D19 and H24. 99 to 100 (LY) contributes to the a carbohydrate binding site. Residue D208 participates in Ca(2+) binding. R228 serves as a coordination point for a carbohydrate.

It belongs to the leguminous lectin family. Homodimer and homotetramer. Oligomerization is pH-dependent with homotetramers forming at pH 4 and above.

Functionally, D-mannose/D-glucose-binding lectin. Has anti-inflammatory activity in animal models when applied intravenously. Has antinociceptive activity in mice when applied intravenously. The polypeptide is Lectin alpha chain (Canavalia boliviana).